Here is a 538-residue protein sequence, read N- to C-terminus: [Pyruvate dehydrogenase [acetyl-transferring]]-phosphatase 1, mitochondrial (538 aa).

The N-terminal 71 residues, 1–71, are a transit peptide targeting the mitochondrion; it reads MPAPTQLFFP…WWQYTQGRRY (71 aa). Residues 109-525 form the PPM-type phosphatase domain; sequence ILGFDSNQLP…DDITIIVVQF (417 aa). 2 residues coordinate Mn(2+): D144 and G145. Residue K202 is modified to N6-acetyllysine. Mn(2+)-binding residues include D418 and D516.

Belongs to the PP2C family. In terms of assembly, heterodimer of a catalytic (PDP1) and a regulatory (PDPR) subunit. Mn(2+) serves as cofactor. The cofactor is Mg(2+).

It is found in the mitochondrion. The enzyme catalyses O-phospho-L-seryl-[pyruvate dehydrogenase E1 alpha subunit] + H2O = L-seryl-[pyruvate dehydrogenase E1 alpha subunit] + phosphate. Its activity is regulated as follows. Magnesium-dependent and calcium-stimulated. PDP1 activity strongly depends on its Ca(2+)-dependent binding to the lipoyl domain of E2 subunit of component of the pyruvate dehydrogenase complex. Functionally, mitochondrial enzyme that catalyzes the dephosphorylation and concomitant reactivation of the alpha subunit of the E1 component of the pyruvate dehydrogenase complex (PDC), thereby stimulating the conversion of pyruvate into acetyl-CoA. This Mus musculus (Mouse) protein is [Pyruvate dehydrogenase [acetyl-transferring]]-phosphatase 1, mitochondrial (Pdp1).